The following is a 573-amino-acid chain: Sulfite oxidase, mitochondrial (573 aa).

A mitochondrion-targeting transit peptide spans methionine 1–serine 34. The segment covering glycine 14–leucine 26 has biased composition (basic residues). The tract at residues glycine 14 to glycine 50 is disordered. The 79-residue stretch at leucine 108–glutamate 186 folds into the Cytochrome b5 heme-binding domain. Histidine 144 and histidine 168 together coordinate heme b. A hinge region spans residues valine 190–serine 199. Positions proline 200–lysine 423 are moco domain. Mo-molybdopterin contacts are provided by residues tyrosine 240–histidine 244, cysteine 287, aspartate 344, histidine 383, arginine 388, and asparagine 399–lysine 401. The segment at glycine 424–lysine 567 is homodimerization.

Heme b is required as a cofactor. The cofactor is Mo-molybdopterin. In terms of tissue distribution, expressed in the ensheathing glia with relatively weak expression in the CNS cortex (at protein level).

The protein localises to the mitochondrion intermembrane space. It carries out the reaction sulfite + O2 + H2O = sulfate + H2O2. It participates in energy metabolism; sulfur metabolism. Its function is as follows. Required in ensheathing glial cells for normal larval locomotion. Oxidizes sulfite which is required to maintain glutamate homeostasis and as a consequence, neuronal network function. The protein is Sulfite oxidase, mitochondrial of Drosophila melanogaster (Fruit fly).